A 468-amino-acid polypeptide reads, in one-letter code: H(+)/Cl(-) exchange transporter ClcA (468 aa).

The Cytoplasmic portion of the chain corresponds to 1-30 (MSTRETFKISLLAKMPKDVINQFLSKDKTP). A helical membrane pass occupies residues 31–67 (FSVLFLSLLVGILAGLVGTYFEQAVHLVSETRTDWLK). The Periplasmic segment spans residues 68–74 (SEIGSFL). Residues 75-98 (PLWLAAFLISAFLAFIGYFLVHRF) traverse the membrane as a helical segment. Residues 104 to 108 (GSGIP) carry the Selectivity filter part_1 motif. Serine 105 contributes to the chloride binding site. Residues 107–114 (IPEIEGAM) constitute an intramembrane region (helical). At 115–121 (DGMRPVR) the chain is on the cytoplasmic side. 2 consecutive transmembrane segments (helical) span residues 122 to 139 (WWRV…ALGS) and 146 to 164 (EGPT…SDIF). Residues 144–148 (GREGP) carry the Selectivity filter part_2 motif. Residues 165–174 (RVKNEDTRHS) are Cytoplasmic-facing. 2 intramembrane regions (helical) span residues 175 to 187 (LLAA…LAAA) and 191 to 199 (PLAGIMFVI). The Cytoplasmic portion of the chain corresponds to 200 to 212 (EEMRPQFRYTLIS). A helical membrane pass occupies residues 213-230 (VRAVIISAVAANIVFRVI). Residues 231-250 (NGQDAVITMPQYDAPELSTL) lie on the Periplasmic side of the membrane. Residues 251 to 279 (GLFLLLGALFGVFGVLFNYLITLAQDLFV) form a helical membrane-spanning segment. Residues 280 to 285 (KFHRND) lie on the Cytoplasmic side of the membrane. A helical transmembrane segment spans residues 286-307 (RKRYLLTGSMIGGCFGLLLLYV). Residues 308 to 327 (PELTGGGISLIPTITNGGYG) lie on the Periplasmic side of the membrane. 2 consecutive transmembrane segments (helical) span residues 328 to 347 (AGIL…LCFG) and 353 to 374 (GIFA…LIAK). A Selectivity filter part_3 motif is present at residues 353 to 357 (GIFAP). Residues isoleucine 354 and phenylalanine 355 each contribute to the chloride site. Residues 375–384 (MWFPELNIEP) lie on the Periplasmic side of the membrane. Residues 385-399 (GMFAIAGMGALFAAT) constitute an intramembrane region (helical). The segment at residues 400-402 (VRA) is an intramembrane region (note=Loop between two helices). The helical intramembrane region spans 403-414 (PITGILLVIEMT). Positions 415–419 (NNYHL) form an intramembrane region, note=Loop between two helices. A helical transmembrane segment spans residues 420–436 (ILPLIITSLGAVIFAQL). Residues 437-468 (LGGQPIYSQLLHRTLKNQKLQQQDLPPQSPNS) are Cytoplasmic-facing. Tyrosine 443 is a chloride binding site.

Belongs to the chloride channel (TC 2.A.49) family. ClcA subfamily. In terms of assembly, homodimer.

The protein resides in the cell inner membrane. It carries out the reaction 2 chloride(in) + H(+)(out) = 2 chloride(out) + H(+)(in). Its function is as follows. Proton-coupled chloride transporter. Functions as antiport system and exchanges two chloride ions for 1 proton. Probably acts as an electrical shunt for an outwardly-directed proton pump that is linked to amino acid decarboxylation, as part of the extreme acid resistance (XAR) response. The chain is H(+)/Cl(-) exchange transporter ClcA from Vibrio cholerae serotype O1 (strain ATCC 39315 / El Tor Inaba N16961).